The primary structure comprises 290 residues: Concanavalin-A (290 aa).

The signal sequence occupies residues 1 to 29 (MAISKKSSLFLPIFTFITMFLMVVNKVSS). A carbohydrate contacts are provided by D119 and R139. D119 is a Ca(2+) binding site. Residues 149-163 (VIRNSTTIDFNAAYN) constitute a propeptide that is removed on maturation. Residue N152 is glycosylated (N-linked (GlcNAc...) asparagine). Residues E171 and D173 each contribute to the Mn(2+) site. D173, Y175, N177, and D182 together coordinate Ca(2+). D182 and H187 together coordinate Mn(2+). 262-263 (LY) contacts a carbohydrate. The propeptide occupies 282 to 290 (EIPDIATVV).

The protein belongs to the leguminous lectin family. As to quaternary structure, homotetramer. Post-translationally, the mature chain consists of residues 164-281 followed by 30-148. To form a mature chain the precursor undergoes further post-translational modification after removal of the signal sequence; cleavage after Asn at positions Asn-148, Asn-163, and Asn-281 is followed by transposition and ligation (By formation of a new peptide bond) of residues 164-281 and 30-148.

In terms of biological role, glucose/D-mannose/rhamnose specific lectin. Has hemagglutinating activity towards rabbit erythrocytes. Has mitogenic activity towards murine splenocytes that is inhibited by glucose. Inhibits HIV-1 reverse transcriptase with an IC(50) of 35 uM. Has a potent antiproliferative activity against L1210 leukemia cells in vitro that is not inhibited by glucose. Inhibits translation in cell-free rabbit reticulocyte system with an IC(50) of 2.08 uM. Lacks anti-fungal activity against M.arachidicola, B.cenera and F.oxysporum. The sequence is that of Concanavalin-A from Canavalia gladiata (Sword bean).